The primary structure comprises 443 residues: Probable glycine dehydrogenase (decarboxylating) subunit 1 (443 aa).

It belongs to the GcvP family. N-terminal subunit subfamily. The glycine cleavage system is composed of four proteins: P, T, L and H. In this organism, the P 'protein' is a heterodimer of two subunits.

The enzyme catalyses N(6)-[(R)-lipoyl]-L-lysyl-[glycine-cleavage complex H protein] + glycine + H(+) = N(6)-[(R)-S(8)-aminomethyldihydrolipoyl]-L-lysyl-[glycine-cleavage complex H protein] + CO2. Its function is as follows. The glycine cleavage system catalyzes the degradation of glycine. The P protein binds the alpha-amino group of glycine through its pyridoxal phosphate cofactor; CO(2) is released and the remaining methylamine moiety is then transferred to the lipoamide cofactor of the H protein. In Desulfovibrio desulfuricans (strain ATCC 27774 / DSM 6949 / MB), this protein is Probable glycine dehydrogenase (decarboxylating) subunit 1.